A 270-amino-acid polypeptide reads, in one-letter code: Formamidopyrimidine-DNA glycosylase (270 aa).

Pro-2 functions as the Schiff-base intermediate with DNA in the catalytic mechanism. Glu-3 functions as the Proton donor in the catalytic mechanism. Catalysis depends on Lys-59, which acts as the Proton donor; for beta-elimination activity. Positions 91, 110, and 151 each coordinate DNA. The FPG-type zinc finger occupies 236 to 270; it reads RVYGRDKEPCVTCGQQVKSKVLGGRNTFWCSRCQK. Arg-260 serves as the catalytic Proton donor; for delta-elimination activity.

It belongs to the FPG family. In terms of assembly, monomer. Zn(2+) serves as cofactor.

It carries out the reaction Hydrolysis of DNA containing ring-opened 7-methylguanine residues, releasing 2,6-diamino-4-hydroxy-5-(N-methyl)formamidopyrimidine.. The enzyme catalyses 2'-deoxyribonucleotide-(2'-deoxyribose 5'-phosphate)-2'-deoxyribonucleotide-DNA = a 3'-end 2'-deoxyribonucleotide-(2,3-dehydro-2,3-deoxyribose 5'-phosphate)-DNA + a 5'-end 5'-phospho-2'-deoxyribonucleoside-DNA + H(+). Involved in base excision repair of DNA damaged by oxidation or by mutagenic agents. Acts as a DNA glycosylase that recognizes and removes damaged bases. Has a preference for oxidized purines, such as 7,8-dihydro-8-oxoguanine (8-oxoG). Has AP (apurinic/apyrimidinic) lyase activity and introduces nicks in the DNA strand. Cleaves the DNA backbone by beta-delta elimination to generate a single-strand break at the site of the removed base with both 3'- and 5'-phosphates. This chain is Formamidopyrimidine-DNA glycosylase, found in Bdellovibrio bacteriovorus (strain ATCC 15356 / DSM 50701 / NCIMB 9529 / HD100).